Here is a 345-residue protein sequence, read N- to C-terminus: 2-oxoglutarate and iron-dependent oxygenase domain-containing protein 2 (345 aa).

The region spanning 207 to 301 is the Fe2OG dioxygenase domain; that stretch reads DSHKAFVVKY…RWNLIIWMRA (95 aa). Residues histidine 227, aspartate 229, and histidine 282 each contribute to the Fe cation site. Arginine 292 is a binding site for 2-oxoglutarate.

This sequence belongs to the OGFOD2 family. Fe(2+) is required as a cofactor. Requires L-ascorbate as cofactor.

This is 2-oxoglutarate and iron-dependent oxygenase domain-containing protein 2 (ogfod2) from Danio rerio (Zebrafish).